The chain runs to 1448 residues: DNA-directed RNA polymerase subunit beta' (1448 aa).

Zn(2+)-binding residues include Cys66, Cys68, Cys81, and Cys84. Asp474, Asp476, and Asp478 together coordinate Mg(2+). Zn(2+) is bound by residues Cys814, Cys888, Cys895, and Cys898. The interval 1408–1448 (LEELQAAIGGDGESPSGDGAAGDGAPSEEDVEQIEASGSEN) is disordered.

Belongs to the RNA polymerase beta' chain family. The RNAP catalytic core consists of 2 alpha, 1 beta, 1 beta' and 1 omega subunit. When a sigma factor is associated with the core the holoenzyme is formed, which can initiate transcription. Mg(2+) serves as cofactor. It depends on Zn(2+) as a cofactor.

It catalyses the reaction RNA(n) + a ribonucleoside 5'-triphosphate = RNA(n+1) + diphosphate. Functionally, DNA-dependent RNA polymerase catalyzes the transcription of DNA into RNA using the four ribonucleoside triphosphates as substrates. The protein is DNA-directed RNA polymerase subunit beta' of Salinibacter ruber (strain DSM 13855 / M31).